A 130-amino-acid polypeptide reads, in one-letter code: Secreted cysteine-rich effector 2 (130 aa).

An N-terminal signal peptide occupies residues 1-23 (MLINAARLLLPAAALVHLSLAWA). Residues 68 to 85 (LKNGEDWCKHCASPRVSV) form a plant immunity suppression domain region.

The protein localises to the secreted. Its subcellular location is the host cell. It localises to the host periplasm. Functionally, secreted effector required for full virulence of U.virens. Inhibits host pathogen-associated molecular pattern-triggered immunity including flg22- and chitin-induced defense gene expression and oxidative burst. The chain is Secreted cysteine-rich effector 2 from Ustilaginoidea virens (Rice false smut fungus).